The following is a 200-amino-acid chain: Glycerol-3-phosphate acyltransferase (200 aa).

5 consecutive transmembrane segments (helical) span residues 6-26 (LTLGMILAAYLAGSISSAVLV), 56-76 (SAAMVLFFDMLKGALPAYIAF), 82-102 (QVALGAIAIAACLGHIFPIFF), 118-138 (APIGHELALALMVTWIVMVLI), and 141-161 (YSSLAAITTAMLAPIYTWFLD).

This sequence belongs to the PlsY family. Probably interacts with PlsX.

The protein localises to the cell inner membrane. The catalysed reaction is an acyl phosphate + sn-glycerol 3-phosphate = a 1-acyl-sn-glycero-3-phosphate + phosphate. It participates in lipid metabolism; phospholipid metabolism. In terms of biological role, catalyzes the transfer of an acyl group from acyl-phosphate (acyl-PO(4)) to glycerol-3-phosphate (G3P) to form lysophosphatidic acid (LPA). This enzyme utilizes acyl-phosphate as fatty acyl donor, but not acyl-CoA or acyl-ACP. This chain is Glycerol-3-phosphate acyltransferase, found in Shewanella sediminis (strain HAW-EB3).